The primary structure comprises 208 residues: Small ribosomal subunit protein uS4 (208 aa).

The 66-residue stretch at 98 to 163 (RRLDNVVYRL…KPRFIEIKEK (66 aa)) folds into the S4 RNA-binding domain.

The protein belongs to the universal ribosomal protein uS4 family. As to quaternary structure, part of the 30S ribosomal subunit. Contacts protein S5. The interaction surface between S4 and S5 is involved in control of translational fidelity.

In terms of biological role, one of the primary rRNA binding proteins, it binds directly to 16S rRNA where it nucleates assembly of the body of the 30S subunit. Functionally, with S5 and S12 plays an important role in translational accuracy. The chain is Small ribosomal subunit protein uS4 from Caldicellulosiruptor saccharolyticus (strain ATCC 43494 / DSM 8903 / Tp8T 6331).